The chain runs to 287 residues: Neugrin (287 aa).

Residues Met1–Ala23 form the signal peptide. Residues Ser149–Val169 form a disordered region. An N-linked (GlcNAc...) asparagine glycan is attached at Asn202.

This sequence belongs to the neugrin family. As to quaternary structure, forms a regulatory protein-RNA complex, consisting of RCC1L, NGRN, RPUSD3, RPUSD4, TRUB2, FASTKD2 and 16S mt-rRNA. Interacts with 16S mt-rRNA; this interaction is direct.

Its subcellular location is the nucleus. The protein resides in the secreted. The protein localises to the mitochondrion membrane. Plays an essential role in mitochondrial ribosome biogenesis. As a component of a functional protein-RNA module, consisting of RCC1L, NGRN, RPUSD3, RPUSD4, TRUB2, FASTKD2 and 16S mitochondrial ribosomal RNA (16S mt-rRNA), controls 16S mt-rRNA abundance and is required for intra-mitochondrial translation of core subunits of the oxidative phosphorylation system. This chain is Neugrin (NGRN), found in Bos taurus (Bovine).